The primary structure comprises 895 residues: Endochitinase 2 (895 aa).

A signal peptide spans 1-22 (MGLTNILAAFIAVSSLFIQSLA). In terms of domain architecture, GH18 spans 29–340 (SNLAVYWGQG…DIMKEVLLRC (312 aa)). A glycan (N-linked (GlcNAc...) asparagine) is linked at asparagine 90. Glutamate 175 functions as the Proton donor in the catalytic mechanism. The interval 343–712 (DPPTSTVTST…APSSSTTEDR (370 aa)) is disordered. Low complexity predominate over residues 346-425 (TSTVTSTISA…ISTRSASTET (80 aa)). The span at 426–478 (VTTRSQEPPSTTISTRPASTETVTTRSQEPPSSTISTRSASTETVTTRSQEPP) shows a compositional bias: polar residues. A compositionally biased stretch (low complexity) spans 479–505 (SSTISTRSASTETSTSSQDSPSTTIST). Positions 506 to 543 (KSAPTGTVTTRSQDLPSTTISTRSPETETETVTTKSQD) are enriched in polar residues. The span at 544–555 (SPSITLSTRSSS) shows a compositional bias: low complexity. Polar residues predominate over residues 556–577 (AETVSTRSQHSSSTTISTKSAP). Residues 578–589 (TETGTTSEHSTS) show a composition bias toward low complexity. A compositionally biased stretch (polar residues) spans 590-657 (MPVSTRSAST…ISTELPSQTH (68 aa)). Low complexity-rich tracts occupy residues 658-692 (STTDSTPVSSSPTIPSGSTTIIPGTASDPVSAPTT) and 699-712 (TLTLAPSSSTTEDR). Residue glycine 866 is the site of GPI-anchor amidated glycine attachment. The propeptide at 867–895 (GAMTVRSMDVVAKALITAGAAVLGLFLGL) is removed in mature form.

The protein belongs to the glycosyl hydrolase 18 family. Chitinase class III subfamily.

Its subcellular location is the cell membrane. The catalysed reaction is Random endo-hydrolysis of N-acetyl-beta-D-glucosaminide (1-&gt;4)-beta-linkages in chitin and chitodextrins.. In terms of biological role, may be associated with endosporulation. This Coccidioides immitis (strain RS) (Valley fever fungus) protein is Endochitinase 2 (CTS2).